The following is a 118-amino-acid chain: UPF0102 protein ROP_66030 (118 aa).

Belongs to the UPF0102 family.

This chain is UPF0102 protein ROP_66030, found in Rhodococcus opacus (strain B4).